The primary structure comprises 31 residues: Cytochrome b6-f complex subunit 6 (31 aa).

The chain crosses the membrane as a helical span at residues 4 to 24 (IISYFGLLLATLTFTIVLFVG).

It belongs to the PetL family. The 4 large subunits of the cytochrome b6-f complex are cytochrome b6, subunit IV (17 kDa polypeptide, PetD), cytochrome f and the Rieske protein, while the 4 small subunits are PetG, PetL, PetM and PetN. The complex functions as a dimer.

It localises to the plastid. It is found in the chloroplast thylakoid membrane. In terms of biological role, component of the cytochrome b6-f complex, which mediates electron transfer between photosystem II (PSII) and photosystem I (PSI), cyclic electron flow around PSI, and state transitions. PetL is important for photoautotrophic growth as well as for electron transfer efficiency and stability of the cytochrome b6-f complex. The chain is Cytochrome b6-f complex subunit 6 from Staurastrum punctulatum (Green alga).